Reading from the N-terminus, the 87-residue chain is Translation initiation factor IF-1 2 (87 aa).

The S1-like domain occupies 1 to 72 (MAADDHIEME…TKGRIARRTT (72 aa)). Residues 65–87 (GRIARRTTTPSGGPRPARSGNRR) are disordered.

The protein belongs to the IF-1 family. As to quaternary structure, component of the 30S ribosomal translation pre-initiation complex which assembles on the 30S ribosome in the order IF-2 and IF-3, IF-1 and N-formylmethionyl-tRNA(fMet); mRNA recruitment can occur at any time during PIC assembly.

The protein resides in the cytoplasm. Functionally, one of the essential components for the initiation of protein synthesis. Stabilizes the binding of IF-2 and IF-3 on the 30S subunit to which N-formylmethionyl-tRNA(fMet) subsequently binds. Helps modulate mRNA selection, yielding the 30S pre-initiation complex (PIC). Upon addition of the 50S ribosomal subunit IF-1, IF-2 and IF-3 are released leaving the mature 70S translation initiation complex. The sequence is that of Translation initiation factor IF-1 2 from Nitratidesulfovibrio vulgaris (strain ATCC 29579 / DSM 644 / CCUG 34227 / NCIMB 8303 / VKM B-1760 / Hildenborough) (Desulfovibrio vulgaris).